The sequence spans 446 residues: Divalent metal cation transporter MntH (446 aa).

Transmembrane regions (helical) follow at residues 32-52 (LAFL…GNWI), 59-79 (AQFG…AMLL), 107-127 (AIIF…AEVI), 139-159 (IPLI…LFIM), 168-188 (AIVG…VYIS), 205-225 (IIAN…TIMP), 264-284 (SIAF…FYGV), 303-323 (PVLG…ALLA), 355-375 (LVTR…FRGN), 381-401 (QLLV…LIPL), and 420-440 (VNIC…YLII).

This sequence belongs to the NRAMP family.

It localises to the cell membrane. Its function is as follows. H(+)-stimulated, divalent metal cation uptake system. The polypeptide is Divalent metal cation transporter MntH (Staphylococcus haemolyticus (strain JCSC1435)).